Here is a 283-residue protein sequence, read N- to C-terminus: Putative S-adenosyl-L-methionine-dependent methyltransferase SAV_474/SAV474 (283 aa).

S-adenosyl-L-methionine is bound by residues Asp-121 and 150–151; that span reads DL. Residues 258-283 are disordered; it reads AAYGRPISTPPQREERPGGLISAVRR.

It belongs to the UPF0677 family.

Exhibits S-adenosyl-L-methionine-dependent methyltransferase activity. This chain is Putative S-adenosyl-L-methionine-dependent methyltransferase SAV_474/SAV474, found in Streptomyces avermitilis (strain ATCC 31267 / DSM 46492 / JCM 5070 / NBRC 14893 / NCIMB 12804 / NRRL 8165 / MA-4680).